Reading from the N-terminus, the 427-residue chain is MTQMLEARKGHITEEMEKVALIEGVTPEFVREGVAKGHIVIPKNKFRSRDKICGIGGGLDVKVNGLMGTSSDRNDMEMEAKKLRILEECGANAFMDLSTGDDIDAMRKQSLTISNIAAGCVPVYQASVEAIEKHGSMVGMTEDELFDTVEKQCQEGMDFMAIHSALNWSVLNALKKSGRVTDVVSRGGSFLTAWMFHNKKENPLYEHFDRLLEILKATDTVLSIGDAIRPGANADSLDSAQVQGLIVAGELTKRALEAGVQVMIEGPGHVPLNQIATTMQLQKQLCYGVPYYILGFLATDVAPGYDNITGAIGGAFAGMHGADFLCYLTPAEHLGLPNEDDVRMGVRTTKIAADAANVLKRGGNAWNRSLAMSKARVARDEKVQVANALDPEYLESKLKAEPESHGCAACGKSKCPADVAAEFFGIA.

It belongs to the ThiC family. 5-hydroxybenzimidazole synthase subfamily. Requires [4Fe-4S] cluster as cofactor.

It catalyses the reaction 5-amino-1-(5-phospho-beta-D-ribosyl)imidazole + AH2 + S-adenosyl-L-methionine = 5-hydroxybenzimidazole + 5'-deoxyadenosine + formate + L-methionine + A + NH4(+) + phosphate + 2 H(+). It participates in cofactor biosynthesis; adenosylcobalamin biosynthesis. Its function is as follows. Together with BzaA, catalyzes the conversion of aminoimidazole ribotide (AIR) to 5-hydroxybenzimidazole (5-HBI) in a radical S-adenosyl-L-methionine (SAM)-dependent reaction. Is thus involved in the anaerobic biosynthesis of dimethylbenzimidazole (DMB), the lower axial ligand of vitamin B12 (cobalamin). Requires BzaA for catalytic activity, as BzaB alone displays no activity. This chain is 5-hydroxybenzimidazole synthase BzaB, found in Eubacterium limosum.